A 178-amino-acid polypeptide reads, in one-letter code: Peptidyl-prolyl cis-trans isomerase H (178 aa).

One can recognise a PPIase cyclophilin-type domain in the interval 14-177 (FFDISIGDVP…LPVKITECGQ (164 aa)).

It belongs to the cyclophilin-type PPIase family. PPIase H subfamily.

The protein localises to the nucleus. The catalysed reaction is [protein]-peptidylproline (omega=180) = [protein]-peptidylproline (omega=0). In terms of biological role, PPIases accelerate the folding of proteins. It catalyzes the cis-trans isomerization of proline imidic peptide bonds in oligopeptides. The chain is Peptidyl-prolyl cis-trans isomerase H (cyp7) from Rhizopus delemar (strain RA 99-880 / ATCC MYA-4621 / FGSC 9543 / NRRL 43880) (Mucormycosis agent).